The primary structure comprises 742 residues: Zinc finger protein 280C (742 aa).

Glycyl lysine isopeptide (Lys-Gly) (interchain with G-Cter in SUMO2) cross-links involve residues Lys-10, Lys-23, Lys-42, Lys-65, Lys-85, Lys-123, and Lys-135. Residues 138–168 (FTKTSPQEDSGACSVSQSDSTQDIPSSNILQ) show a composition bias toward polar residues. Residues 138 to 243 (FTKTSPQEDS…QSAPGSSSLR (106 aa)) form a disordered region. Glycyl lysine isopeptide (Lys-Gly) (interchain with G-Cter in SUMO2) cross-links involve residues Lys-180, Lys-186, and Lys-193. Residues 182–191 (PSTSKVNSVN) are compositionally biased toward polar residues. Residues 200–222 (SISETRPCSSSSSQTAPSGASSQ) show a composition bias toward low complexity. Polar residues predominate over residues 223–243 (TVLSNVNTSSVQSAPGSSSLR). 5 C2H2-type zinc fingers span residues 323–345 (FKCF…MKHH), 360–383 (TTCQ…ESTH), 390–413 (TICK…KDTH), 420–443 (YICQ…RSSH), and 477–499 (YRCP…KLEH). Residues 523–578 (LGSSQSRASSPPSSTIPSTSLQLSVPKSKSTTTKNNSKVSANKATTTSPQTVATTT) are compositionally biased toward low complexity. Residues 523–608 (LGSSQSRASS…YKQKRQRTRK (86 aa)) are disordered. Polar residues predominate over residues 579-592 (GKPSASKPGTGTTK). Lys-580 is covalently cross-linked (Glycyl lysine isopeptide (Lys-Gly) (interchain with G-Cter in SUMO2)). Residues 593–608 (SKAKPSYKQKRQRTRK) are compositionally biased toward basic residues.

The protein resides in the nucleus. In terms of biological role, may function as a transcription factor. The chain is Zinc finger protein 280C (Znf280c) from Mus musculus (Mouse).